The primary structure comprises 113 residues: Small ribosomal subunit protein bS6 (113 aa).

It belongs to the bacterial ribosomal protein bS6 family.

In terms of biological role, binds together with bS18 to 16S ribosomal RNA. This chain is Small ribosomal subunit protein bS6, found in Pseudoalteromonas translucida (strain TAC 125).